Consider the following 173-residue polypeptide: Copper transport protein ctr5 (173 aa).

Residues 1–54 (MSLSKMSMSGMSGMGMGSSSNSSAATCRMSMLWNWYIHDSCFLAKSWHINTGNK) lie on the Extracellular side of the membrane. Residues 55 to 75 (FAGSIIGIFFFAVAIEGLSLV) form a helical membrane-spanning segment. At 76–135 (QRMFDRWIVAHSNGKTLSGPLRIFFPSSTVHVTVWQQLIRAAMYSSFYLSATILMLIVMS) the chain is on the cytoplasmic side. The helical transmembrane segment at 136–156 (FNGYAILFGFVGAWIGFFLFA) threads the bilayer. Topologically, residues 157 to 173 (SDTYGTPSTGTGCCESR) are extracellular.

This sequence belongs to the copper transporter (Ctr) (TC 1.A.56) family. SLC31A subfamily. In terms of assembly, interacts with ctr4.

The protein resides in the membrane. Functionally, required for high affinity copper (probably reduced Cu I) transport into the cell. In Schizosaccharomyces pombe (strain 972 / ATCC 24843) (Fission yeast), this protein is Copper transport protein ctr5 (ctr5).